The primary structure comprises 101 residues: Putative pterin-4-alpha-carbinolamine dehydratase (101 aa).

This sequence belongs to the pterin-4-alpha-carbinolamine dehydratase family.

It catalyses the reaction (4aS,6R)-4a-hydroxy-L-erythro-5,6,7,8-tetrahydrobiopterin = (6R)-L-erythro-6,7-dihydrobiopterin + H2O. The protein is Putative pterin-4-alpha-carbinolamine dehydratase of Rhodopseudomonas palustris (strain BisA53).